Consider the following 172-residue polypeptide: Translationally-controlled tumor protein homolog (172 aa).

Positions 1-172 (MIIYKDCITE…FKDGLIIEKC (172 aa)) constitute a TCTP domain.

Belongs to the TCTP family.

The protein localises to the cytoplasm. Its function is as follows. Involved in calcium binding and microtubule stabilization. The polypeptide is Translationally-controlled tumor protein homolog (tpt1) (Xenopus laevis (African clawed frog)).